The following is a 333-amino-acid chain: Trimethylamine N-oxide-binding protein (333 aa).

The signal sequence occupies residues 1–42; sequence MRLFREIAANDPGPTGRMKNMKTFTTALATGVLALCPLAALA. Trp-55, Trp-102, Glu-131, Trp-177, and Trp-222 together coordinate trimethylamine N-oxide. Ca(2+)-binding residues include Pro-249, Val-251, Asn-254, Ala-257, and Asp-260.

The complex is probably composed of two ATP-binding proteins (TmoW), two transmembrane proteins (TmoV) and a solute-binding protein (TmoX). Monomer in solution, but forms homodimers in crystals.

It localises to the periplasm. Its activity is regulated as follows. Binds a Ca(2+) ion, which has little effect on either the binding affinity or the secondary structure, but plays an important role in maintaining the stability of TmoX. It may modulate the protein stability in response to biological needs and environmental changes. Thermostability is dramatically decreased when Ca(2+) is removed by EDTA. In terms of biological role, part of the ABC transporter complex TmoXWV involved in trimethylamine N-oxide (TMAO) import. Is specific for TMAO and essential for TMAO metabolism. Binds TMAO with high affinity. In vitro, also presents a high binding affinity for choline, however this transporter seems specific for TMAO and the choline-binding affinity presented by recombinant TmoX may not make physiological sense. In Ruegeria pomeroyi (strain ATCC 700808 / DSM 15171 / DSS-3) (Silicibacter pomeroyi), this protein is Trimethylamine N-oxide-binding protein.